A 194-amino-acid chain; its full sequence is Large ribosomal subunit protein eL15 (194 aa).

The tract at residues Ala-165–Lys-194 is disordered.

This sequence belongs to the eukaryotic ribosomal protein eL15 family.

The polypeptide is Large ribosomal subunit protein eL15 (Methanococcus aeolicus (strain ATCC BAA-1280 / DSM 17508 / OCM 812 / Nankai-3)).